Here is a 175-residue protein sequence, read N- to C-terminus: Alpha-crystallin B chain (175 aa).

The residue at position 1 (Met-1) is an N-acetylmethionine. A Phosphoserine modification is found at Ser-19. Ser-41 is a glycosylation site (O-linked (GlcNAc) serine). A phosphoserine mark is found at Ser-45 and Ser-59. In terms of domain architecture, sHSP spans 56 to 164 (RAPSWIDTGL…PERTIPITRE (109 aa)). His-83 contributes to the Zn(2+) binding site. Lys-90 carries N-linked (Glc) (glycation) lysine glycosylation. Position 92 is an N6-acetyllysine; alternate (Lys-92). The N-linked (Glc) (glycation) lysine; alternate glycan is linked to Lys-92. Residues His-104, Glu-106, His-111, and His-119 each coordinate Zn(2+). Positions 144–175 (TVNGPRKQASGPERTIPITREEKPAVTAAPKK) are disordered. The residue at position 166 (Lys-166) is an N6-acetyllysine. Thr-170 carries O-linked (GlcNAc) threonine glycosylation.

It belongs to the small heat shock protein (HSP20) family. As to quaternary structure, heteromer composed of three CRYAA and one CRYAB subunits. Aggregates with homologous proteins, including the small heat shock protein HSPB1, to form large heteromeric complexes. Inter-subunit bridging via zinc ions enhances stability, which is crucial as there is no protein turn over in the lens. Interacts with HSPBAP1 and TTN/titin. Interacts with TMEM109; in the cellular response to DNA damage. Interacts with DES; binds rapidly during early stages of DES filament assembly and a reduced binding seen in the later stages. Interacts with TMED10; the interaction mediates the translocation from the cytoplasm into the ERGIC (endoplasmic reticulum-Golgi intermediate compartment) and thereby secretion. Interacts with ATP6V1A and with MTOR, forming a ternary complex. It is not known whether either Lys-90, or Lys-92, or both are glycated. Lens as well as other tissues.

It is found in the cytoplasm. It localises to the nucleus. Its subcellular location is the secreted. The protein localises to the lysosome. May contribute to the transparency and refractive index of the lens. Has chaperone-like activity, preventing aggregation of various proteins under a wide range of stress conditions. In lens epithelial cells, stabilizes the ATP6V1A protein, preventing its degradation by the proteasome. The sequence is that of Alpha-crystallin B chain (CRYAB) from Bos taurus (Bovine).